A 279-amino-acid polypeptide reads, in one-letter code: 3-methyl-2-oxobutanoate hydroxymethyltransferase (279 aa).

Asp44 and Asp83 together coordinate Mg(2+). Residues 44–45, Asp83, and Lys113 contribute to the 3-methyl-2-oxobutanoate site; that span reads DS. Glu115 provides a ligand contact to Mg(2+). Residue Glu182 is the Proton acceptor of the active site.

This sequence belongs to the PanB family. Homodecamer; pentamer of dimers. Mg(2+) serves as cofactor.

It is found in the cytoplasm. It carries out the reaction 3-methyl-2-oxobutanoate + (6R)-5,10-methylene-5,6,7,8-tetrahydrofolate + H2O = 2-dehydropantoate + (6S)-5,6,7,8-tetrahydrofolate. It functions in the pathway cofactor biosynthesis; (R)-pantothenate biosynthesis; (R)-pantoate from 3-methyl-2-oxobutanoate: step 1/2. Functionally, catalyzes the reversible reaction in which hydroxymethyl group from 5,10-methylenetetrahydrofolate is transferred onto alpha-ketoisovalerate to form ketopantoate. The chain is 3-methyl-2-oxobutanoate hydroxymethyltransferase from Desulfotalea psychrophila (strain LSv54 / DSM 12343).